The chain runs to 286 residues: MAAISASMVKELRERTGLGMMECKKALVEAEGDIEKAIEDLRKSSGMKAAKKAGRVSADGVVAVKVSDDNSYAVVVEVNSETDFVARDENFLGFVGDVVGAAFDKKSADVAALMESGLEEKRQALVQKIGENINVRRASMLSSDVVGAYVHGNNRIAVLVALNGGNAELAKDIAMHIAAVNPQFVSRDDVSDEVIAKEREIYKAQADQSGKPAEIVDKMVDGRINKFLAEISLLEQAFVKDPDVKVGDLVKKAGAQVVAMVRYEVGEGIEKEEVDFAAEVAAQLKG.

Residues 82 to 85 are involved in Mg(2+) ion dislocation from EF-Tu; it reads TDFV.

This sequence belongs to the EF-Ts family.

Its subcellular location is the cytoplasm. In terms of biological role, associates with the EF-Tu.GDP complex and induces the exchange of GDP to GTP. It remains bound to the aminoacyl-tRNA.EF-Tu.GTP complex up to the GTP hydrolysis stage on the ribosome. This chain is Elongation factor Ts, found in Hahella chejuensis (strain KCTC 2396).